A 494-amino-acid polypeptide reads, in one-letter code: Tripartite motif-containing protein 5 (494 aa).

Alanine 2 is modified (N-acetylalanine). The segment at 15–59 (CPICLELLTQPLSLDCGHSFCQACLTANHKTSMPDEGERSCPVCR) adopts an RING-type zinc-finger fold. Position 86 is a phosphoserine (serine 86). The B box-type zinc-finger motif lies at 91–133 (QKVDHCARHGEKLLLFCQEDRKVICWLCERSQEHRGHHTFLTE). Zn(2+) is bound by residues cysteine 96, histidine 99, cysteine 118, and histidine 124. Positions 132-241 (TEEVAQEYQV…LISDLEHRLQ (110 aa)) form a coiled coil. The required for interaction with GABARAP and for autophagy stretch occupies residues 186–199 (FEQLRHILDWVESN). The B30.2/SPRY domain maps to 282–494 (LKVMLEVLRE…VPMTLCSPSS (213 aa)).

The protein belongs to the TRIM/RBCC family. Can form homodimers and homotrimers. In addition to lower-order dimerization, also exhibits a higher-order multimerization and both low- and high-order multimerizations are essential for its restriction activity. Interacts with BTBD1 and BTBD2. Interacts with PSMC4, PSMC5, PSMD7 and HSPA8/HSC70. Interacts (via B30.2/SPRY domain) with HSPA1A/B. Interacts with PSMC2, MAP3K7/TAK1, TAB2 and TAB3. Interacts with SQSTM1. Interacts with TRIM6 and TRIM34. Interacts with ULK1 (phosphorylated form), GABARAP, GABARAPL1, GABARAPL2, MAP1LC3A, MAP1LC3C and BECN1. In terms of processing, degraded in a proteasome-independent fashion in the absence of viral infection but in a proteasome-dependent fashion following exposure to restriction sensitive virus. Autoubiquitinated in a RING finger- and UBE2D2-dependent manner. Monoubiquitinated by TRIM21. Deubiquitinated by Yersinia YopJ. Ubiquitination may not lead to proteasomal degradation.

The protein resides in the cytoplasm. Its subcellular location is the nucleus. It carries out the reaction S-ubiquitinyl-[E2 ubiquitin-conjugating enzyme]-L-cysteine + [acceptor protein]-L-lysine = [E2 ubiquitin-conjugating enzyme]-L-cysteine + N(6)-ubiquitinyl-[acceptor protein]-L-lysine.. It participates in protein modification; protein ubiquitination. Capsid-specific restriction factor that prevents infection from non-host-adapted retroviruses. Blocks viral replication early in the life cycle, after viral entry but before reverse transcription. In addition to acting as a capsid-specific restriction factor, also acts as a pattern recognition receptor that activates innate immune signaling in response to the retroviral capsid lattice. Binding to the viral capsid triggers its E3 ubiquitin ligase activity, and in concert with the heterodimeric ubiquitin conjugating enzyme complex UBE2V1-UBE2N (also known as UBC13-UEV1A complex) generates 'Lys-63'-linked polyubiquitin chains, which in turn are catalysts in the autophosphorylation of the MAP3K7/TAK1 complex (includes TAK1, TAB2, and TAB3). Activation of the MAP3K7/TAK1 complex by autophosphorylation results in the induction and expression of NF-kappa-B and MAPK-responsive inflammatory genes, thereby leading to an innate immune response in the infected cell. Plays a role in regulating autophagy through activation of autophagy regulator BECN1 by causing its dissociation from its inhibitors BCL2 and TAB2. In Symphalangus syndactylus (Siamang), this protein is Tripartite motif-containing protein 5 (TRIM5).